Reading from the N-terminus, the 179-residue chain is MKQLLEFIPLILFFAVYKLQGIQAAAITLIIATLIQLMILKLKYGKIEKQQLIMGSAVVFFGSLSAYFNELEFLKWKVTVVYALFSLILLVSQYGFKKPLIQQLLGKEIQLPTYVWHNLNLGWAVFFLLCMLINLYISQYLSDDIWVDFKTFGILGMTLIATLVTGVYIYRYLPKSEQE.

5 helical membrane-spanning segments follow: residues isoleucine 11 to isoleucine 31, leucine 52 to asparagine 69, leucine 71 to valine 91, leucine 121 to leucine 141, and phenylalanine 149 to isoleucine 169.

This sequence belongs to the YciB family.

It localises to the cell inner membrane. In terms of biological role, plays a role in cell envelope biogenesis, maintenance of cell envelope integrity and membrane homeostasis. The protein is Inner membrane-spanning protein YciB of Histophilus somni (strain 129Pt) (Haemophilus somnus).